Reading from the N-terminus, the 61-residue chain is uncharacterized protein (61 aa).

The protein localises to the mitochondrion. This is an uncharacterized protein from Marchantia polymorpha (Common liverwort).